Consider the following 143-residue polypeptide: Photosystem II extrinsic protein U (143 aa).

The first 29 residues, Met-1–Ala-29, serve as a signal peptide directing secretion. Residues Ala-30–Ala-44 constitute a propeptide that is removed on maturation.

The protein belongs to the PsbU family. As to quaternary structure, PSII is composed of 1 copy each of membrane proteins PsbA, PsbB, PsbC, PsbD, PsbE, PsbF, PsbH, PsbI, PsbJ, PsbK, PsbL, PsbM, PsbT, PsbX, PsbY, PsbZ, Psb30/Ycf12, peripheral proteins PsbO, CyanoQ (PsbQ), PsbU, PsbV and a large number of cofactors. It forms dimeric complexes.

The protein localises to the cellular thylakoid membrane. Its function is as follows. One of the extrinsic, lumenal subunits of photosystem II (PSII). PSII is a light-driven water plastoquinone oxidoreductase, using light energy to abstract electrons from H(2)O, generating a proton gradient subsequently used for ATP formation. The extrinsic proteins stabilize the structure of photosystem II oxygen-evolving complex (OEC), the ion environment of oxygen evolution and protect the OEC against heat-induced inactivation. The chain is Photosystem II extrinsic protein U from Leptolyngbya laminosa (Phormidium laminosum).